The primary structure comprises 293 residues: Ribosomal protein L11 methyltransferase (293 aa).

S-adenosyl-L-methionine contacts are provided by Thr145, Gly166, Asp188, and Asn230.

This sequence belongs to the methyltransferase superfamily. PrmA family.

The protein localises to the cytoplasm. It catalyses the reaction L-lysyl-[protein] + 3 S-adenosyl-L-methionine = N(6),N(6),N(6)-trimethyl-L-lysyl-[protein] + 3 S-adenosyl-L-homocysteine + 3 H(+). Methylates ribosomal protein L11. This chain is Ribosomal protein L11 methyltransferase, found in Yersinia pseudotuberculosis serotype O:3 (strain YPIII).